We begin with the raw amino-acid sequence, 551 residues long: E3 ubiquitin-protein ligase TRIM8 (551 aa).

The segment at 15–56 (CPICLHVFVEPVQLPCKHNFCRGCIGEAWAKDSGLVRCPECN) adopts an RING-type zinc-finger fold. B box-type zinc fingers lie at residues 92-132 (CVFC…ARGH) and 140-182 (VRAW…VCDV). Coiled-coil stretches lie at residues 181-249 (DVEI…DLRQ) and 274-295 (ERMQEAKKLLGSLQRLFDKTED). The tract at residues 399-457 (QYGAAGTASSEGQSGQPLGPCSSTQHLVALPGGTQPVHSSPVFPPSQYPNGSTTQQPML) is disordered. Composition is skewed to polar residues over residues 405 to 424 (TASSEGQSGQPLGPCSSTQH) and 446 to 456 (YPNGSTTQQPM).

Belongs to the TRIM/RBCC family. In terms of assembly, homodimer. Interacts with SOCS1 (via) SH2 domain and SOCS box. Interacts with HSP90AB1; prevents nucleus translocation of phosphorylated STAT3 and HSP90AB1. Interacts with MAP3K7/TAK1. Interacts with PIAS3. Interacts with TICAM1. Interacts with TRIM15; this interaction prevents TRIM8 cytoplasmic translocation. In terms of tissue distribution, high expression in heart, liver, and thymus. Expressed in embryonic CNS, kidney, lens and gut.

The catalysed reaction is S-ubiquitinyl-[E2 ubiquitin-conjugating enzyme]-L-cysteine + [acceptor protein]-L-lysine = [E2 ubiquitin-conjugating enzyme]-L-cysteine + N(6)-ubiquitinyl-[acceptor protein]-L-lysine.. It functions in the pathway protein modification; protein ubiquitination. Its function is as follows. E3 ubiquitin-protein ligase that participates in multiple biological processes including cell survival, differentiation, apoptosis, and in particular, the innate immune response. Participates in the activation of interferon-gamma signaling by promoting proteasomal degradation of the repressor SOCS1. Plays a positive role in the TNFalpha and IL-1beta signaling pathways. Mechanistically, induces the 'Lys-63'-linked polyubiquitination of MAP3K7/TAK1 component leading to the activation of NF-kappa-B. Also modulates STAT3 activity through negative regulation of PIAS3, either by degradation of PIAS3 through the ubiquitin-proteasome pathway or exclusion of PIAS3 from the nucleus. Negatively regulates TLR3/4-mediated innate immune response by catalyzing 'Lys-6'- and 'Lys-33'-linked polyubiquitination of TICAM1 and thereby disrupting the TICAM1-TBK1 interaction. The sequence is that of E3 ubiquitin-protein ligase TRIM8 (Trim8) from Mus musculus (Mouse).